Consider the following 408-residue polypeptide: Serine/threonine transporter SstT (408 aa).

The next 10 membrane-spanning stretches (helical) occupy residues M15–W35, F49–I69, L85–F105, A142–L162, P192–L212, L218–F238, Y246–A268, I289–I309, L317–A337, and T362–T382.

The protein belongs to the dicarboxylate/amino acid:cation symporter (DAACS) (TC 2.A.23) family.

The protein resides in the cell inner membrane. It carries out the reaction L-serine(in) + Na(+)(in) = L-serine(out) + Na(+)(out). The catalysed reaction is L-threonine(in) + Na(+)(in) = L-threonine(out) + Na(+)(out). Its function is as follows. Involved in the import of serine and threonine into the cell, with the concomitant import of sodium (symport system). This Marinobacter nauticus (strain ATCC 700491 / DSM 11845 / VT8) (Marinobacter aquaeolei) protein is Serine/threonine transporter SstT.